A 218-amino-acid polypeptide reads, in one-letter code: 3,4-dihydroxy-2-butanone 4-phosphate synthase (218 aa).

D-ribulose 5-phosphate contacts are provided by residues 38 to 39 (RE), D43, 151 to 155 (RRGHT), and E175. E39 is a binding site for Mg(2+). Position 154 (H154) interacts with Mg(2+).

It belongs to the DHBP synthase family. Homodimer. The cofactor is Mg(2+). Mn(2+) serves as cofactor.

It carries out the reaction D-ribulose 5-phosphate = (2S)-2-hydroxy-3-oxobutyl phosphate + formate + H(+). The protein operates within cofactor biosynthesis; riboflavin biosynthesis; 2-hydroxy-3-oxobutyl phosphate from D-ribulose 5-phosphate: step 1/1. Functionally, catalyzes the conversion of D-ribulose 5-phosphate to formate and 3,4-dihydroxy-2-butanone 4-phosphate. The chain is 3,4-dihydroxy-2-butanone 4-phosphate synthase from Vibrio vulnificus (strain CMCP6).